The chain runs to 86 residues: Large ribosomal subunit protein bL31B (86 aa).

The protein belongs to the bacterial ribosomal protein bL31 family. Type B subfamily. Part of the 50S ribosomal subunit.

This Cupriavidus necator (strain ATCC 17699 / DSM 428 / KCTC 22496 / NCIMB 10442 / H16 / Stanier 337) (Ralstonia eutropha) protein is Large ribosomal subunit protein bL31B.